The sequence spans 659 residues: Beta-galactosidase BgaA (659 aa).

Arg-103 lines the substrate pocket. Cys-107 lines the Zn(2+) pocket. Asn-141 lines the substrate pocket. The Proton donor role is filled by Glu-142. Zn(2+)-binding residues include Cys-148, Cys-150, and Cys-153. The active-site Nucleophile is the Glu-298. Position 307 (Trp-307) interacts with substrate.

The protein belongs to the glycosyl hydrolase 42 family. Dimer.

It catalyses the reaction Hydrolysis of terminal non-reducing beta-D-galactose residues in beta-D-galactosides.. Inhibited by Cu(2+), Hg(2+) and Zn(2+). No effect with Ca(2+), Mg(2+), Mn(2+) or excess EDTA (10 mM). Its function is as follows. Involved in plant cell wall degradation in cooperation with cellulosome. Hydrolyzes both p-nitrophenyl-alpha-L-arabinopyranoside (pNPAp) and p-nitrophenyl-beta-D-galactopyranoside (pNPGp), with higher activity for pNPAp. Shows hydrolysis activity against p-nitrophenyl-beta-D-fucopyranoside (pNPFp), but not against p-nitrophenyl-alpha-L-arabinofuranoside (pNPAf), o-nitrophenyl-beta-D-galactopyranoside (oNPGp), p-nitrophenyl-beta-D-xylopyranoside (pNPXp), p-nitrophenyl-beta-D-glucopyranoside (pNPGLp), p-nitrophenyl-beta-D-cellobiopyranoside (pNPCp), p-nitrophenyl-beta-lactopyranoside (pNPLp) or p-nitrophenyl-alpha-galactopyranoside (pNPalphaGp). No detectable activity against arabinan or arabinoxylan, but activity against arabinogalactan can be detected. Increases degradation activity of alpha-L-arabinofuranosidase (ArfA) and endo-1,4-beta-xylanase (XynA) when corn fiber gum and corn stem powder are used as substrates. In Clostridium cellulovorans (strain ATCC 35296 / DSM 3052 / OCM 3 / 743B), this protein is Beta-galactosidase BgaA (bgaA).